The chain runs to 150 residues: Transcriptional repressor NrdR (150 aa).

Residues 3-34 (CPFCAFADSKVVDSRPDKEGSTIRRRRECESC) fold into a zinc finger. An ATP-cone domain is found at 49 to 139 (PLVIKKDGRR…VYRSFKDITE (91 aa)).

The protein belongs to the NrdR family. Zn(2+) serves as cofactor.

Functionally, negatively regulates transcription of bacterial ribonucleotide reductase nrd genes and operons by binding to NrdR-boxes. The chain is Transcriptional repressor NrdR from Geotalea daltonii (strain DSM 22248 / JCM 15807 / FRC-32) (Geobacter daltonii).